The chain runs to 408 residues: Photox toxin (408 aa).

A disordered region spans residues 168–196 (NNQQHIKDSDGRKPVNNMPPPPPPPMADK). Residues 184 to 193 (NMPPPPPPPM) are compositionally biased toward pro residues. The TR mART core domain maps to 190–393 (PPPMADKTQK…LRLTDDASAD (204 aa)). Residues R288, S318, and E355 contribute to the active site.

This sequence in the C-terminal section; belongs to the SpvB family.

The enzyme catalyses L-arginyl-[protein] + NAD(+) = N(omega)-(ADP-D-ribosyl)-L-arginyl-[protein] + nicotinamide + H(+). Mono-ADP-ribosylates chicken skeletal alpha-actin and human non-skeletal beta- and gamma-actin. Mono-ADP-ribosylates 'Arg-177' of yeast actin, blocking its ability to polymerize. Does not possess NAD(+)-glycohydrolase activity, unlike most mART enzymes. Upon expression in S.cerevisiae almost completely inhibits growth. This is Photox toxin (phxA) from Photorhabdus laumondii subsp. laumondii (strain DSM 15139 / CIP 105565 / TT01) (Photorhabdus luminescens subsp. laumondii).